We begin with the raw amino-acid sequence, 793 residues long: ClpA homolog protein (793 aa).

The interval 1–24 (MRPRSNAGSSPPDPEEQEHAQVPS) is disordered. One can recognise a Clp R domain in the interval 22–168 (VPSFSSTLEQ…NFIAHGVAKD (147 aa)). Repeat stretches follow at residues 25-88 (FSST…IDDD) and 103-168 (PTAA…VAKD). Residues 169–194 (PSYGESRPVQGADEPQETPKAEAGEA) are disordered. Basic and acidic residues predominate over residues 185-194 (ETPKAEAGEA). Residues 199–447 (LSKYCVDLNI…AQHLVSDSKR (249 aa)) are i. ATP is bound by residues 244–251 (GDPGVGKT) and 525–532 (GPTGVGKT). An II region spans residues 451–639 (LGTKEIEAVV…ILIMTSNVGA (189 aa)).

It belongs to the ClpA/ClpB family.

This Fuscovulum blasticum (Rhodobacter blasticus) protein is ClpA homolog protein.